Reading from the N-terminus, the 249-residue chain is RING finger protein 223 (249 aa).

The disordered stretch occupies residues 1–44 (MSSGQQVWHTAVPPPRRSSSIASMPRSPSSAGSPRSPGTPGSER). Positions 17–44 (RSSSIASMPRSPSSAGSPRSPGTPGSER) are enriched in low complexity. The RING-type zinc-finger motif lies at 51-102 (CSICFSGYDNIFKTPKELSCTHVFCLECLARLAAAQPVGRPGGEAVPCPFCR). A helical membrane pass occupies residues 199 to 219 (LVSALLLMLFCVALWPVQCAL). The disordered stretch occupies residues 230 to 249 (PPRPPATSTAASPLGPLTDN). A compositionally biased stretch (low complexity) spans 235 to 249 (ATSTAASPLGPLTDN).

It is found in the membrane. In Homo sapiens (Human), this protein is RING finger protein 223 (RNF223).